Reading from the N-terminus, the 253-residue chain is uncharacterized protein (253 aa).

C2HC LYAR-type zinc fingers lie at residues 1-26 (MVFF…FQCR) and 27-51 (NTTF…VKCI). Positions 6, 9, 21, 25, 32, 35, 47, and 50 each coordinate Zn(2+). Residues 136-171 (AAEADKMREEAIRKQEETQKMEKAQKEAAAAAKKET) adopt a coiled-coil conformation.

The protein resides in the nucleus. This is an uncharacterized protein from Caenorhabditis elegans.